Reading from the N-terminus, the 120-residue chain is MERIMFRAKIHRATVTQADLDYVGSVTIDQDLLDAADILVNEKVDIWNITNGNRLHTYALSGPRGSGVIGINGAAAHLMRPGDMVIIAAFGNFTEEEARVLEPKVVLVDARNRLLELEPA.

Ser-25 acts as the Schiff-base intermediate with substrate; via pyruvic acid in catalysis. At Ser-25 the chain carries Pyruvic acid (Ser). A substrate-binding site is contributed by Thr-57. Tyr-58 serves as the catalytic Proton donor. Residue 73-75 (GAA) coordinates substrate.

It belongs to the PanD family. As to quaternary structure, heterooctamer of four alpha and four beta subunits. Pyruvate serves as cofactor. In terms of processing, is synthesized initially as an inactive proenzyme, which is activated by self-cleavage at a specific serine bond to produce a beta-subunit with a hydroxyl group at its C-terminus and an alpha-subunit with a pyruvoyl group at its N-terminus.

The protein resides in the cytoplasm. It carries out the reaction L-aspartate + H(+) = beta-alanine + CO2. Its pathway is cofactor biosynthesis; (R)-pantothenate biosynthesis; beta-alanine from L-aspartate: step 1/1. Catalyzes the pyruvoyl-dependent decarboxylation of aspartate to produce beta-alanine. This is Aspartate 1-decarboxylase from Deinococcus deserti (strain DSM 17065 / CIP 109153 / LMG 22923 / VCD115).